The chain runs to 202 residues: Superoxide dismutase [Mn] (202 aa).

Residue His-27 participates in Mn(2+) binding. Residues Thr-34 and Thr-70 each carry the phosphothreonine modification. Mn(2+) is bound by residues His-82, Asp-164, and His-168.

This sequence belongs to the iron/manganese superoxide dismutase family. In terms of assembly, homodimer. Mn(2+) is required as a cofactor.

It carries out the reaction 2 superoxide + 2 H(+) = H2O2 + O2. In terms of biological role, destroys superoxide anion radicals which are normally produced within the cells and which are toxic to biological systems. The sequence is that of Superoxide dismutase [Mn] (sodA) from Halalkalibacterium halodurans (strain ATCC BAA-125 / DSM 18197 / FERM 7344 / JCM 9153 / C-125) (Bacillus halodurans).